A 360-amino-acid polypeptide reads, in one-letter code: MKTVLIGVGQAGGKLASALQSFDRQTGFGAVLDAVAVNTAKADLQSLPVETVLIGQDRVNGHGVGGDNELGAAVMESDQTEVMSALDGRVTAEAESIFVVAGLGGGSGSGGAPVLAKALAGVYDVPVYVLGILPGADEGALYQVNAGRSLKTVAREADAVLLVDNDAFRSAGESMSEGYDAINEAIARRVGLLLAAGEATEGVGESVVDTSEVINTLRSGGIAALGYASAEASPNAEDNINAVMSTTRRAVLTGTSLPDASDADAALVVIAGEPDTIPRKGVERARRWVEDETGSMQVRGGDFPLESGRLASLVLLGGVERSERVESFMERAREAIDKAETEPREDPKGMWHSDDLDDLL.

Residues Gln10–Lys14, Gly65–Gly66, Gly106–Gly108, Glu138, Asn165, and Asn183 contribute to the GTP site. The segment covering Glu334–Asp354 has biased composition (basic and acidic residues). The segment at Glu334 to Leu360 is disordered.

It belongs to the CetZ family.

The protein localises to the cytoplasm. In terms of biological role, involved in cell shape control. In Haloferax volcanii (strain ATCC 29605 / DSM 3757 / JCM 8879 / NBRC 14742 / NCIMB 2012 / VKM B-1768 / DS2) (Halobacterium volcanii), this protein is Tubulin-like protein CetZ2.